The chain runs to 133 residues: Sporulation-specific protein 2 (133 aa).

The protein belongs to the VPS13 family. In terms of assembly, interacts with spo13 and spo15.

It is found in the cytoplasm. The protein localises to the cytoskeleton. It localises to the microtubule organizing center. The protein resides in the spindle pole body. Involved in sporulation. Plays a significant role in modification of the spindle pole body prior to spore formation and is required for initiating forespore membrane formation. Assists in the localization of spo13 to the outer surface of the SPB. The chain is Sporulation-specific protein 2 (spo2) from Schizosaccharomyces pombe (strain 972 / ATCC 24843) (Fission yeast).